The chain runs to 359 residues: Homeotic protein knotted-1 (359 aa).

Disordered regions lie at residues 1-34 (MEEI…PWAS) and 213-232 (LSSG…TELP). The segment covering 16-31 (GHGHGQHHHHHHHHHP) has biased composition (basic residues). The 21-residue stretch at 242-262 (ELKHHLLKKYSGYLSSLKQEL) folds into the ELK domain. A DNA-binding region (homeobox; TALE-type) is located at residues 263 to 326 (SKKKKKGKLP…NQRKRHWKPS (64 aa)).

It belongs to the TALE/KNOX homeobox family. As to quaternary structure, forms homodimers. Binds to MBP2C; this interaction reduces RNA binding capacity. Expressed in apical meristems of vegetative and floral stems as well as in the underlying ground meristem. Specifically expressed in vascular bundles developing both in the leaf and stem. Very low levels of expression in leaves.

The protein localises to the nucleus. It localises to the cell junction. Its subcellular location is the plasmodesma. The protein resides in the cytoplasm. Binds to RNA. Possible transcription factor that regulates genes involved in development. Mutations in KN-1 alter leaf development. Foci of cells along the lateral vein do not differentiate properly but continue to divide, forming knots. May participate in the switch from indeterminate to determinate cell fates. Probably binds to the DNA sequence 5'-TGAC-3'. This chain is Homeotic protein knotted-1 (KN-1), found in Zea mays (Maize).